We begin with the raw amino-acid sequence, 301 residues long: NAD kinase (301 aa).

D81 acts as the Proton acceptor in catalysis. NAD(+) contacts are provided by residues 81 to 82 (DG), 155 to 156 (NE), H166, R183, D185, 196 to 201 (TAYSLS), and Q256.

Belongs to the NAD kinase family. Requires a divalent metal cation as cofactor.

The protein localises to the cytoplasm. It carries out the reaction NAD(+) + ATP = ADP + NADP(+) + H(+). Functionally, involved in the regulation of the intracellular balance of NAD and NADP, and is a key enzyme in the biosynthesis of NADP. Catalyzes specifically the phosphorylation on 2'-hydroxyl of the adenosine moiety of NAD to yield NADP. The chain is NAD kinase from Mannheimia succiniciproducens (strain KCTC 0769BP / MBEL55E).